The primary structure comprises 60 residues: Sperm protamine P1 (60 aa).

Residues 1-60 are disordered; that stretch reads MARYRHSRSRSRSRYQRRRRRRSRYRSQRRRYRRRRGSRRRRRRGRRRGYRRRYSRRRRY.

The protein belongs to the protamine P1 family. Testis.

The protein resides in the nucleus. The protein localises to the chromosome. Protamines substitute for histones in the chromatin of sperm during the haploid phase of spermatogenesis. They compact sperm DNA into a highly condensed, stable and inactive complex. This Phascolarctos cinereus (Koala) protein is Sperm protamine P1 (PRM1).